We begin with the raw amino-acid sequence, 68 residues long: Neuronal regeneration-related protein (68 aa).

The tract at residues 21 to 54 is disordered; the sequence is MEGRLPKGRLPVPKEVNRKKNDETNAASLTPLGS. Polar residues predominate over residues 44-54; it reads TNAASLTPLGS.

Interacts with the latency-associated peptides (LAP) of TGFB1 and TGFB2; the interaction results in a decrease in TGFB autoinduction. Interacts with FLNA. Post-translationally, phosphorylated on Ser-59. Phosphorylation decreases stability and activity.

The protein localises to the cytoplasm. May have roles in neural function and cellular differentiation. Ectopic expression promotes axonal regeneration, induces differentiation of fibroblast into myofibroblast, induces myofibroblast ameboid migration, augments motility of gliomas, and increases retinoic-acid regulation of lipid-droplet biogenesis. Down-regulates the expression of TGFB1 and TGFB2 but not of TGFB3. May play a role in the regulation of alveolar generation. In Pongo abelii (Sumatran orangutan), this protein is Neuronal regeneration-related protein (NREP).